The chain runs to 4923 residues: MDKGNNSLPTYDEIDEYLSRRNSTFVWLLVATIMSCGWIIYLTYYNSRNIGLVLTLIINRLYKNGYIHIGSFSFSVLSGKVMFRDVYFINKDMSIRIQDGLLIFRWWKMYNPKQKQHDPKAETRLYVTVNGFEFHVYNRTDLYTRLQEIFGLEPTLIQSNRDEEKGREQRDKSLESVHIKAETQDPSSSWRSLIPVIKVNISTGRVAFGNHHLPQTLCMNFDDAFLTYATKPPSSHLDQFMHIVKGSLENVRVMLVPSPRYLGLQNDEPPRLMGEGFVVMQSNDVDIYYYQDEPGLVPEELENGDTEACSEDAKLQDLPPCWGLDIVCGKGTDFNYGPWADRQRDSLWKFFLPADYQPMKVSEVPTPGKPRQILAFELRMNIIADATIDLLFTKNRETNAVHVNVGAGSYLEVNIPMTVGENGYSPTVKGQLLHVDTTSSMQYRTLLEAEMLAFHVIASYPRVWNMPQSWQCEIEVYKATYHFIYAQKNFFTDLIQDWASDSEPDIYSFVPYSWKFKILFHQFEMIWAANQHNWIDCSTKQQENVYLAACGETLNIDFTLPFHEFVPVTCNTRFCLRAEDTDMRLCLPDCHPSRYPLLTLAKDYQHSKSPPDNNMPAEGQGAPPKNSKPRWRNMTHAEAGWVDCWSVPNFMLIIDYTWHPIYPQKSEQQLKQSLSEIEESMLSALRPPELAPPVPPPPRVSSDPSLLPPDRLHVEMELSPGSHITLYGPLLRALVSIKENYFGEDDMYTDFEESLSSPVLSTCSSSSCWTGVGLEDKSSKEAPHPLTLRPWDITVFINLHKVHGRLPTHCSSDGPEGPTGFMERLCFEMKKGYKETMLQLVLSPVHVFVSDNYQRPPIDAVLRDGHLSLSGLQMRAHAMFSAEGLPAGSDTLEYAWLIDVQAGALTGRVSVPQCASLLEWGESFVFHVMSREFQLEQPKPSVTCQHGVDRRICDAKHAGLPGHCRTSEDLKYTMTRLTVDGAHIFVVEHGCAANIKTGALRVATCNLHTAAVGEGISAVLQDVVIAQFIEQQEVARLGLPPPLLRRSHWLEAGSVTFNLITADVALAADHSAKYEVQRQFLELHDMKTKRLWFLWPEEKYKRSRNRCGCLGGCRFFGGTIGGLDFFRLEEITPSSSSAFSGISAECDMSYGQSLLHPGEWIVTKETPKIPDVIYAAKGIAVRRDTCSPAPVVDLERRVQQHLSLHVPQRSHSSASSSEENSSSSAALPLLAGERESPSPSTELMNVTTDCPIPEGPPLRSPLRSPLKRQSSVQSARLGSTKSLSAAVFVEKALPPAGVQFSSEVSRSDENVLDSPRQRRSYGSFPFTPSADSSTFHQYRSVDSSMSVADSEAYFSATEEFEPISSDEGPGTYPGRKRRRRQQGQPHTEHSRTSIYHSVEGPLSINEIRPPLLPSHTSQASFVSALGLEEEGSIETEKADPGILTTQPHLMACYQNYLAHYHVSNWAVKQPTNKRTSKSSLHRPLDLDTPTSEESSTCFDQLSIPTFKMVKAGLSASSLLDRGVQLMGDINSTPYTPLDKRAMDNTDEDTVTEDWTVDQPLAQTRTTAIVEVKGAVNVVLTPLVVEALDRYIESMVHFASFRHPASILDDLHGKVLNEVYQISKSTVSESSAAKQEHKISKTEGTTPGSLSTPHGQTDLSIKPDNVKIKGLQANVTVPKVNLCVLQASVEESSPSNKSITHVSLVALCFDRIATQLRMNRGIVEDTEKPSVMMEKFSSASKMAPQSSGSLRSNAGIEKGKEIAARLNIHRIHSQLRGLDSSDIGACAITAIPFEKSKVLFSLEEIDDFVLVDETEPSISTEHMPEHNPDHSRLGTSPEKWGWIMFECGIENLTVKGGRQSGAVLYSAFGVMGGADSGVRDGVSKSNDSSGSQTGSGYSTDVSDDNLPNDAQSPASEPNNNSDSDEQDEGVESDDLKKDLPLLPPPPDSSSMKLTIKEIWFSFAAPTNIRSHAPVMSRQLNLLSTATPAVGAWLVPIDQLKSSLEKLDMEATLRVCAVMGCIMTEALEKKSIHIPFRSKYNRVTKRARYLHENPSCLLCNILHRYLQQADYTIIEEATMNDGLPALVTLRKGLVALARQWMKFIVVTQGFKAVGLPQQLPKPKEQEPVEPEQTPGLDCGGALQSDTSADGAEFEFDAGTVSEHTMLLEGVCSRPAPTGNSAPVTGVEIMRKLSKSHTHSESALRIKGSHPYQSLSYTSGDTAADSPAHVSRTGLQCNHSPRKESLLSYLTGSIHSLHNLLEATPHRANEQTATKSSSLTRTGNSVGADVLTEHPLLSEPFSVSFYNWMSNAVGNRTGGNVQDSPLNRSQHNSLQTGGVLPTIPSASDFNTVLSSDQNTLDTHSQHSHSQHSTSQEDLLDQDETNLCPAAVQLADAQVVFKPLLSHIGIQPQDAPPLSYKMYFGEHLSFSGTLECLRADIVDSDTSKERKNKRAHRQGMVNLPPLDFKPALMIETFSLNAVVLEKCMSTPPSASALSFHELSRRPQASVHCHFTVACQAIRQHVDMALVRLIHQFSTMIDDIKATQTDIKLNRYTAGSSSPTPTKGRPYREFRSSDFSRSSRGSLNGAARLGTQKGKRGMVGPGLDTLTRSREPRGRGTLGRSERRTSKVSRKGSRDVADHMTIQMDDSDSITVSEQSEPSAECWQNMYKLLNFYSLISDPTGILEKNQDNALSEGGRSPADPPCRVVFESEEETPPSRLGRRRSLVSAEPQHVTLIVFGVGMVNRTHLEADIGGLTMEAELKKIHGSFTLKEKMKDILHQKMTETCASAHIGCVNIVLLEGISPDIQLEDFPTSPTSTAKQEFLTVVKCNIAKSQALYSAQRGLKTNNAAIFKVGAIFINIPQHPATLHSMMVRSSHQLSKQISDLIRQPSNTPPPNREDTPTPQPSEVSINQTPVEANEFPQLPEGLEKKPIVLKFSAMLDGITIGAALLPSLKAEYKMGRMKSHGMTGAQTRFTFELPNHKLCFQSKVSPVDVSAMPPTASLTLPPVTMSGQYIIQEHEGHSDTAWAPEYSSYLQGNYLRCVAEIGSFEHNLTTDLLNHLVFLQKVFMKEVNEVIQKVSGGEQPIPLWNEHDVSTDGDKPKILLYSINLTFKGIQMTATTPSMRAVRFETGWIELELSNRVQCKTTPTGSNYLKLFGKCQVDLNLALGQIVKHQVYEEAGSDFHQVAYFRTRIGLRNALQEEISGSSDKEAVLITLSRPIIFAQPVAFDRAVLFWLNYKAAYDNWKEQRLALNSDIHMATKEVVDKLPAIQQTSVQAFSTLFLQLTVNDLGICLPITSATQANYSIDFDTGSALVLTIESTLITACSSESLVSKGHFKNFCIRFAEGFETTWDDWKPEIRGDLVMNACVVPDGTYEVCSRTTGQASAESSSAGTWTLNVLWKMCGIDVHMDPNIGKRLNALGNTLTSLTGEEDNDDITDLNSVNMADLSDEDESDGMSPPVHMESVDLRRQAVMSNQIIDARGRKFSKRLVDIRELNEQAKVIDDLKKLGASEGTINQEIQRYQQLESVAVNDIRRDVRKKLRRSSMRAASLKDKWGLGYKPSYSNSRSKSISAAGRPPMKRSDRPREDLPDIKVEAASPAPRVTFNIDMFPEETEMELLSVTIDDAAHYPSCSVFSAPGTPAVFSPTVPFQPDDSRRDDLSSTSSEDTDKEDDFDRDRPQSYYRRPGGSQRKSALSALFSERWPATPPQRGGLAPPTERNIDFELDVRVEIDSGKCVLHPSTQPTEHEDLALRRSCERSSRSLDQDSPPKKRKVQPSFPSSSHLLSAKRVPTSLQSKSSDIETTVFYIPGVDVKLHYNSKTLKTESPNASRGSSLPRTLSKESKLYGMRDAPTPAPAPAASGPGKTNTLLSPPPPPLPSAKGKAGVGVKTAKLYAWVALQTLPEEMVISPCLLDFLEKALETIPITPVDRNYTTLNVHEEDVGHFDSVEPLEESQVSLVSSATSPYSSFPVDVVVYVRVQPSQIRFSCLPMSRVECMLKLPSLDLVFSSNRGELEPTSATYPSEGQHTPSSTPPSVHNANRVPGGPSTGLGSPLGRSRHHSSQSDLTGPPINSSGLSFTACMSDFSLYVFHPYGAGKQKSAVTGLPPGPGPLGSVEDEASSVTGRKDSLSINLEFVKVSLSRMRRTGCPAFIDTFIASKGGKMDTTLINISAVCDIGSASFKYDMRRLSEILAFPRAWYRRSIARRLFLGDQTINLPASGPATPDSVESIAQHLSPESSRKAYWRTWDGQTTQHPSSSVFTDTTPSHSHLKSPATGRTRSVSDSSAPRRDSVTKTSTPSFRNGKAAAQQGSPWETLVVFAINLKQLNVQMNMSNVMGNNTWTTSGLKSQGRLSVGSNRDREISMSIGLGRSKLDSKGGVVGGNIDVNTLEMVSHISEHPNQQPSHKIQITMGSTEARLDYMGSSILMGIFSNADLQLQDEWKVNLCTAEASLSEKSEIFVHGDLQWDIFQVIISRSTTPDLIKIGMKLQEFFTQQFDTSKRALSTWGPVPYMPPKTPVINTDKASAELYMDAAHHRHWPNVLKMVAGCHISLFQMPLPEDAVQLGGSMSLHGNHMTLACFHGPNFRSKSWVLFHLEEPNIAFWTEAQKIWEDGCSDDSTYIVQTLDFHLGHNTMVTKPCGALESPMATITKVTRRRHENPPHGVATVKEWFNYVTAMRNEELNLLRNVDANNSESGAAAKSSSLLSGFRGSSSYNHETETIFALPKMQLQFKSIHVQDPEEPSLSDANSKPKVECSVVTEFTDHICVTMDAELIMFLHDLVSAYLKEKEKALFAPRMFASRPGQKSPTTQQDEPSSDKKEEREKEEGVNYTTVDWREFLCNTWHLEPTLRLISWTGRKIDPVGVDYILQKLGFHHARTTIPKWLQRGVMDPLDKVLSVLIKKLGTALQDEREKKGQRDKDEH.

Residues 25 to 45 (FVWLLVATIMSCGWIIYLTYY) form a helical membrane-spanning segment. 21 disordered regions span residues 160–179 (NRDE…SVHI), 606–631 (HSKS…KPRW), 1203–1277 (SLHV…SARL), 1300–1334 (FSSE…DSST), 1357–1400 (TEEF…SVEG), 1471–1494 (TNKR…SEES), 1630–1660 (SAAK…DLSI), 1878–1948 (RDGV…PDSS), 2191–2235 (SKSH…LQCN), 2262–2281 (PHRA…RTGN), 2355–2375 (NTLD…QEDL), 2550–2655 (RYTA…SEQS), 2885–2910 (IRQP…VSIN), 3564–3596 (YSNS…IKVE), 3645–3695 (FSPT…RKSA), 3739–3797 (LHPS…SLQS), 3848–3884 (GMRD…AKGK), 4017–4071 (PTSA…TGPP), 4102–4124 (AVTG…SSVT), 4249–4309 (DGQT…AAAQ), and 4797–4827 (RMFA…EKEE). Over residues 1210–1226 (SHSSASSSEENSSSSAA) the composition is skewed to low complexity. Residues 1237–1248 (PSPSTELMNVTT) are compositionally biased toward polar residues. The span at 1260-1271 (SPLRSPLKRQSS) shows a compositional bias: low complexity. Positions 1641–1658 (TEGTTPGSLSTPHGQTDL) are enriched in polar residues. The span at 1887–1898 (SSGSQTGSGYST) shows a compositional bias: low complexity. Residues 1907 to 1920 (NDAQSPASEPNNNS) are compositionally biased toward polar residues. The span at 1921–1931 (DSDEQDEGVES) shows a compositional bias: acidic residues. 2 stretches are compositionally biased toward polar residues: residues 2208 to 2218 (PYQSLSYTSGD) and 2267 to 2281 (EQTA…RTGN). A compositionally biased stretch (polar residues) spans 2550-2560 (RYTAGSSSPTP). Residues 2606–2624 (TRSREPRGRGTLGRSERRT) are compositionally biased toward basic and acidic residues. Residues 3581-3595 (KRSDRPREDLPDIKV) are compositionally biased toward basic and acidic residues. Residues 3746–3770 (TEHEDLALRRSCERSSRSLDQDSPP) are compositionally biased toward basic and acidic residues. A compositionally biased stretch (polar residues) spans 4017-4039 (PTSATYPSEGQHTPSSTPPSVHN). Positions 4044–4056 (PGGPSTGLGSPLG) are enriched in low complexity. 3 stretches are compositionally biased toward polar residues: residues 4249–4268 (DGQT…TPSH), 4276–4286 (TGRTRSVSDSS), and 4804–4814 (GQKSPTTQQDE). Positions 4816–4827 (SSDKKEEREKEE) are enriched in basic and acidic residues.

It is found in the cell membrane. It localises to the endoplasmic reticulum membrane. The protein localises to the mitochondrion membrane. Functionally, tube-forming lipid transport protein which provides phosphatidylethanolamine for glycosylphosphatidylinositol (GPI) anchor synthesis in the endoplasmic reticulum. Plays a role in endosomal trafficking and endosome recycling. Also involved in the actin cytoskeleton and cilia structural dynamics. Acts as a regulator of phagocytosis. The chain is Bridge-like lipid transfer protein family member 1 (bltp1) from Danio rerio (Zebrafish).